Here is a 446-residue protein sequence, read N- to C-terminus: Histone acetyltransferase type B subunit 2 (446 aa).

WD repeat units lie at residues 138 to 178 (DHPG…ITPS), 189 to 229 (GHKE…GTSK), 231 to 270 (LKYS…QIID), 286 to 326 (GHSD…SKVH), and 330 to 370 (GHQD…DEQT). Positions 372–376 (DDAED) are interaction with the histone H4 N-terminus. Residues 387–427 (GHTNHLADFSWNRNDPWLVCSAAEDNLLQIWKVANSIVSKE) form a WD 6 repeat. Residues 427–446 (EPADMSTPELDDPKPKQSSH) form a disordered region. The span at 437 to 446 (DDPKPKQSSH) shows a compositional bias: basic and acidic residues.

Belongs to the WD repeat RBAP46/RBAP48/MSI1 family. As to quaternary structure, component of the HAT-B complex composed of at least hat-1 and hat-2. The HAT-B complex binds to histone H4 tail.

It is found in the cytoplasm. Its subcellular location is the nucleus. Its function is as follows. Regulatory subunit of the histone acetylase B (HAT-B) complex. The complex acetylates 'Lys-12' of histone H4 which is required for telomeric silencing. This chain is Histone acetyltransferase type B subunit 2 (hat-2), found in Neurospora crassa (strain ATCC 24698 / 74-OR23-1A / CBS 708.71 / DSM 1257 / FGSC 987).